The following is a 503-amino-acid chain: TGF-beta receptor type-1 (503 aa).

A signal peptide spans 1–29; that stretch reads MEAAAAAPRRPQLLIVLVAAATLLPGAKA. Topologically, residues 30 to 126 are extracellular; sequence LQCFCHLCTK…QSAGLGPVEL (97 aa). Cystine bridges form between cysteine 32/cysteine 50, cysteine 34/cysteine 37, cysteine 44/cysteine 67, cysteine 82/cysteine 96, and cysteine 97/cysteine 102. An N-linked (GlcNAc...) asparagine glycan is attached at asparagine 41. A helical transmembrane segment spans residues 127 to 147; the sequence is AAVIAGPVCFVCIALMLMVYI. Topologically, residues 148–503 are cytoplasmic; it reads CHNRTVIHHR…QLSQQEGIKM (356 aa). Phosphoserine is present on serine 165. In terms of domain architecture, GS spans 175–204; sequence TTLKDLIYDMTTSGSGSGLPLLVQRTIART. A phosphothreonine; by TGFBR2 mark is found at threonine 185 and threonine 186. Residues serine 187, serine 189, and serine 191 each carry the phosphoserine; by TGFBR2 modification. The FKBP1A-binding motif lies at 193–194; sequence LP. The region spanning 205–495 is the Protein kinase domain; it reads IVLQESIGKG…LRIKKTLSQL (291 aa). ATP contacts are provided by residues 211–219 and lysine 232; that span reads IGKGRFGEV. Lysine 268 participates in a covalent cross-link: Glycyl lysine isopeptide (Lys-Gly) (interchain with G-Cter in ubiquitin). Aspartate 333 acts as the Proton acceptor in catalysis. Lysine 391 participates in a covalent cross-link: Glycyl lysine isopeptide (Lys-Gly) (interchain with G-Cter in SUMO).

This sequence belongs to the protein kinase superfamily. TKL Ser/Thr protein kinase family. TGFB receptor subfamily. As to quaternary structure, homodimer; in the endoplasmic reticulum but also at the cell membrane. Heterohexamer; TGFB1, TGFB2 and TGFB3 homodimeric ligands assemble a functional receptor composed of two TGFBR1 and TGFBR2 heterodimers to form a ligand-receptor heterohexamer. The respective affinity of TGBRB1 and TGFBR2 for the ligands may modulate the kinetics of assembly of the receptor and may explain the different biological activities of TGFB1, TGFB2 and TGFB3. Component of a complex composed of TSC22D1 (via N-terminus), TGFBR1 and TGFBR2; the interaction between TSC22D1 and TGFBR1 is inhibited by SMAD7 and promoted by TGFB1. Interacts with CD109; inhibits TGF-beta receptor activation in keratinocytes. Interacts with RBPMS. Interacts (unphosphorylated) with FKBP1A; prevents TGFBR1 phosphorylation by TGFBR2 and stabilizes it in the inactive conformation. Interacts with SMAD2, SMAD3 and ZFYVE9; ZFYVE9 recruits SMAD2 and SMAD3 to the TGF-beta receptor. Interacts with TRAF6 and MAP3K7; induces MAP3K7 activation by TRAF6. Interacts with PARD6A; involved in TGF-beta induced epithelial to mesenchymal transition. Interacts with NEDD4L. Interacts with SMAD7, SMURF1 and SMURF2; SMAD7 recruits NEDD4L, SMURF1 and SMURF2 to the TGF-beta receptor. Interacts with USP15 and VPS39. Interacts with SDCBP (via C-terminus). Interacts with CAV1 and this interaction is impaired in the presence of SDCBP. Interacts with APPL1; interaction is TGF beta dependent; mediates trafficking of the TGFBR1 from the endosomes to the nucleus via microtubules in a TRAF6-dependent manner. Interacts with GPR50; this interaction promotes the constitutive activation of SMAD signaling pathway. Mg(2+) is required as a cofactor. Requires Mn(2+) as cofactor. Post-translationally, phosphorylated at basal levels in the absence of ligand. Activated upon phosphorylation by TGFBR2, mainly in the GS domain. Phosphorylation in the GS domain abrogates FKBP1A-binding. In terms of processing, N-Glycosylated. Ubiquitinated; undergoes ubiquitination catalyzed by several E3 ubiquitin ligases including SMURF1, SMURF2 and NEDD4L2. Results in the proteasomal and/or lysosomal degradation of the receptor thereby negatively regulating its activity. Deubiquitinated by USP15, leading to stabilization of the protein and enhanced TGF-beta signal. Its ubiquitination and proteasome-mediated degradation is negatively regulated by SDCBP. Ubiquitinated by BFAR via'Lys-63'-linked ubiquitination at Lys-268, leading to TGF-beta signaling activation.

It is found in the cell membrane. The protein localises to the cell junction. It localises to the tight junction. The protein resides in the membrane raft. Its subcellular location is the cell surface. The catalysed reaction is L-threonyl-[receptor-protein] + ATP = O-phospho-L-threonyl-[receptor-protein] + ADP + H(+). It catalyses the reaction L-seryl-[receptor-protein] + ATP = O-phospho-L-seryl-[receptor-protein] + ADP + H(+). With respect to regulation, kept in an inactive conformation by FKBP1A preventing receptor activation in absence of ligand. CD109 is another inhibitor of the receptor. In terms of biological role, transmembrane serine/threonine kinase forming with the TGF-beta type II serine/threonine kinase receptor, TGFBR2, the non-promiscuous receptor for the TGF-beta cytokines TGFB1, TGFB2 and TGFB3. Transduces the TGFB1, TGFB2 and TGFB3 signal from the cell surface to the cytoplasm and is thus regulating a plethora of physiological and pathological processes including cell cycle arrest in epithelial and hematopoietic cells, control of mesenchymal cell proliferation and differentiation, wound healing, extracellular matrix production, immunosuppression and carcinogenesis. The formation of the receptor complex composed of 2 TGFBR1 and 2 TGFBR2 molecules symmetrically bound to the cytokine dimer results in the phosphorylation and the activation of TGFBR1 by the constitutively active TGFBR2. Activated TGFBR1 phosphorylates SMAD2 which dissociates from the receptor and interacts with SMAD4. The SMAD2-SMAD4 complex is subsequently translocated to the nucleus where it modulates the transcription of the TGF-beta-regulated genes. This constitutes the canonical SMAD-dependent TGF-beta signaling cascade. Also involved in non-canonical, SMAD-independent TGF-beta signaling pathways. For instance, TGFBR1 induces TRAF6 autoubiquitination which in turn results in MAP3K7 ubiquitination and activation to trigger apoptosis. Also regulates epithelial to mesenchymal transition through a SMAD-independent signaling pathway through PARD6A phosphorylation and activation. This is TGF-beta receptor type-1 (Tgfbr1) from Mus musculus (Mouse).